A 301-amino-acid polypeptide reads, in one-letter code: Protoheme IX farnesyltransferase (301 aa).

9 consecutive transmembrane segments (helical) span residues 20 to 42 (FTELVKIGIVNSNTITAFTGMWL), 55 to 75 (VDVIFFTIVGSALIVAASGAF), 105 to 125 (ALMVALVLGVVGTIMLFMTTW), 126 to 146 (QAGVLGVIGVFLYVVVYSLYA), 150 to 172 (LVSNTVIGSFSGAVPPLIGWFAV), 176 to 198 (FSMVPIMLFLVMFCWQPPHFYAI), 227 to 247 (MFFWVILLTILPFFMFDLGIV), 249 to 269 (VILATLLNIGWLALSVYGFKM), and 280 to 300 (FIYSLNYMTILFVAMVVISIF).

Belongs to the UbiA prenyltransferase family. Protoheme IX farnesyltransferase subfamily. As to quaternary structure, interacts with CtaA.

It localises to the cell membrane. The enzyme catalyses heme b + (2E,6E)-farnesyl diphosphate + H2O = Fe(II)-heme o + diphosphate. The protein operates within porphyrin-containing compound metabolism; heme O biosynthesis; heme O from protoheme: step 1/1. Functionally, converts heme B (protoheme IX) to heme O by substitution of the vinyl group on carbon 2 of heme B porphyrin ring with a hydroxyethyl farnesyl side group. This Listeria welshimeri serovar 6b (strain ATCC 35897 / DSM 20650 / CCUG 15529 / CIP 8149 / NCTC 11857 / SLCC 5334 / V8) protein is Protoheme IX farnesyltransferase.